A 745-amino-acid polypeptide reads, in one-letter code: Capsid protein (745 aa).

Disordered stretches follow at residues 44 to 64 (RRRFRRRRRRRGRPRYRGRRK), 580 to 602 (SQAIDDPSQKPTHALPEPGTLPR), 638 to 662 (EYSSDDENFSPGPSKRPALDTRPEG), and 678 to 699 (QDSQDSEESQEEAPLLEEQAHQ). Acidic residues predominate over residues 681–692 (QDSEESQEEAPL).

It belongs to the anelloviridae capsid protein family.

The protein resides in the virion. Self assemble to form an icosahedral capsid. The chain is Capsid protein from Torque teno virus (isolate Human/China/CT23F/2001) (TTV).